Consider the following 313-residue polypeptide: Formimidoylglutamase (313 aa).

Mn(2+)-binding residues include H130, D155, H157, D159, D241, and D243.

The protein belongs to the arginase family. Requires Mn(2+) as cofactor.

The catalysed reaction is N-formimidoyl-L-glutamate + H2O = formamide + L-glutamate. It functions in the pathway amino-acid degradation; L-histidine degradation into L-glutamate; L-glutamate from N-formimidoyl-L-glutamate (hydrolase route): step 1/1. Catalyzes the conversion of N-formimidoyl-L-glutamate to L-glutamate and formamide. In Salmonella heidelberg (strain SL476), this protein is Formimidoylglutamase.